The primary structure comprises 90 residues: Acylphosphatase (90 aa).

In terms of domain architecture, Acylphosphatase-like spans 3–90 (QYHMIADGRV…KGYRTFSISY (88 aa)). Active-site residues include Arg18 and Asn36.

Belongs to the acylphosphatase family.

It catalyses the reaction an acyl phosphate + H2O = a carboxylate + phosphate + H(+). The polypeptide is Acylphosphatase (acyP) (Bacillus velezensis (strain DSM 23117 / BGSC 10A6 / LMG 26770 / FZB42) (Bacillus amyloliquefaciens subsp. plantarum)).